Consider the following 368-residue polypeptide: Probable multidrug ABC transporter permease YbhR (368 aa).

The Cytoplasmic segment spans residues 1–24 (MFHRLWTLIRKELQSLLREPQTRA). Residues 25–45 (ILILPVLIQVILFPFAATLEV) form a helical membrane-spanning segment. At 46–173 (TNATIAIYDE…WYNPNLDYKW (128 aa)) the chain is on the periplasmic side. An ABC transmembrane type-2 domain is found at 129-366 (AQIAANYLQQ…SAAYAMFRRK (238 aa)). Residues 174–194 (FVVPSLIAMITTIGVMIVTSL) form a helical membrane-spanning segment. Over 195–222 (SVAREREQGTLDQLLVSPLTTWQIFIGK) the chain is Cytoplasmic. The helical transmembrane segment at 223 to 243 (AVPALIVATFQATIVLAIGIW) threads the bilayer. Topologically, residues 244–253 (AYQIPFAGSL) are periplasmic. The helical transmembrane segment at 254–274 (ALFYFTMVIYGLSLVGFGLLI) threads the bilayer. Topologically, residues 275–284 (SSLCSTQQQA) are cytoplasmic. The helical transmembrane segment at 285–305 (FIGVFVFMMPAILLSGYVSPV) threads the bilayer. Residues 306–339 (ENMPVWLQNLTWINPIRHFTDITKQIYLKDASLD) lie on the Periplasmic side of the membrane. Residues 340–360 (IVWNSLWPLLVITATTGSAAY) form a helical membrane-spanning segment. At 361 to 368 (AMFRRKVM) the chain is on the cytoplasmic side.

Belongs to the ABC-2 integral membrane protein family. The complex is probably composed of two ATP-binding proteins (YbhF) and two transmembrane proteins (YbhR and YbhS).

It is found in the cell inner membrane. Part of the ABC transporter complex YbhFSR that could be involved in efflux of cefoperazone. Probably involved in the translocation of the substrate across the membrane. The sequence is that of Probable multidrug ABC transporter permease YbhR (ybhR) from Escherichia coli O157:H7.